Here is a 382-residue protein sequence, read N- to C-terminus: MATTSLASAFCSMKAVMLARDGRGMKPRSSDLQLRAGNAQTSLKMINGTKFSYTESLKKLPDWSMLFAVITTIFSAAEKQWTNLEWKPKPNPPQLLDDHFGPHGLVFRRTFAIRSYEVGPDRSTSIVAVMNHLQEAALNHAKSVGILGDGFGTTLEMSKRDLIWVVKRTHVAVERYPAWGDTVEVECWVGASGNNGRRHDFLVRDCKTGEILTRCTSLSVMMNTRTRRLSKIPEEVRGEIGPAFIDNVAVKDEEIKKPQKLNDSTADYIQGGLTPRWNDLDINQHVNNIKYVDWILETVPDSIFESHHISSFTIEYRRECTMDSVLQSLTTVSGGSSEAGLVCEHLLQLEGGSEVLRAKTEWRPKLTDSFRGISVIPAESSV.

The N-terminal 83 residues, 1–83 (MATTSLASAF…FSAAEKQWTN (83 aa)), are a transit peptide targeting the chloroplast. Active-site residues include Asn-283, His-285, and Cys-320.

The protein belongs to the acyl-ACP thioesterase family.

It localises to the plastid. The protein localises to the chloroplast. It catalyses the reaction dodecanoyl-[ACP] + H2O = dodecanoate + holo-[ACP] + H(+). Plays an essential role in chain termination during de novo fatty acid synthesis. High thioesterase activity for myristoyl-ACP. This is Dodecanoyl-[acyl-carrier-protein] hydrolase, chloroplastic from Cinnamomum camphora (Camphor tree).